The primary structure comprises 33 residues: Kappa-theraphotoxin-Pg2a (33 aa).

Intrachain disulfides connect cysteine 2–cysteine 16, cysteine 9–cysteine 21, and cysteine 15–cysteine 28.

Expressed by the venom gland.

It is found in the secreted. In terms of biological role, gating modifier of Kv2.1/KCNB1 channels. The protein is Kappa-theraphotoxin-Pg2a of Chilobrachys guangxiensis (Chinese earth tiger tarantula).